The following is a 296-amino-acid chain: tRNA uridine(34) hydroxylase (296 aa).

The 95-residue stretch at 121–215 (AQPDVAVIDT…YLEDIPQDQS (95 aa)) folds into the Rhodanese domain. Cys-175 acts as the Cysteine persulfide intermediate in catalysis.

This sequence belongs to the TrhO family.

It carries out the reaction uridine(34) in tRNA + AH2 + O2 = 5-hydroxyuridine(34) in tRNA + A + H2O. Its function is as follows. Catalyzes oxygen-dependent 5-hydroxyuridine (ho5U) modification at position 34 in tRNAs. This is tRNA uridine(34) hydroxylase from Roseobacter denitrificans (strain ATCC 33942 / OCh 114) (Erythrobacter sp. (strain OCh 114)).